The sequence spans 175 residues: Crossover junction endodeoxyribonuclease RuvC (175 aa).

Catalysis depends on residues D8, E68, and D140. D8, E68, and D140 together coordinate Mg(2+).

This sequence belongs to the RuvC family. In terms of assembly, homodimer which binds Holliday junction (HJ) DNA. The HJ becomes 2-fold symmetrical on binding to RuvC with unstacked arms; it has a different conformation from HJ DNA in complex with RuvA. In the full resolvosome a probable DNA-RuvA(4)-RuvB(12)-RuvC(2) complex forms which resolves the HJ. Mg(2+) is required as a cofactor.

Its subcellular location is the cytoplasm. The enzyme catalyses Endonucleolytic cleavage at a junction such as a reciprocal single-stranded crossover between two homologous DNA duplexes (Holliday junction).. Functionally, the RuvA-RuvB-RuvC complex processes Holliday junction (HJ) DNA during genetic recombination and DNA repair. Endonuclease that resolves HJ intermediates. Cleaves cruciform DNA by making single-stranded nicks across the HJ at symmetrical positions within the homologous arms, yielding a 5'-phosphate and a 3'-hydroxyl group; requires a central core of homology in the junction. The consensus cleavage sequence is 5'-(A/T)TT(C/G)-3'. Cleavage occurs on the 3'-side of the TT dinucleotide at the point of strand exchange. HJ branch migration catalyzed by RuvA-RuvB allows RuvC to scan DNA until it finds its consensus sequence, where it cleaves and resolves the cruciform DNA. In Pseudomonas fluorescens (strain Pf0-1), this protein is Crossover junction endodeoxyribonuclease RuvC.